The primary structure comprises 425 residues: Serine--tRNA ligase (425 aa).

233 to 235 (TAE) is a binding site for L-serine. 264 to 266 (RRE) is an ATP binding site. An L-serine-binding site is contributed by glutamate 287. 351–354 (EISS) contacts ATP. Serine 385 serves as a coordination point for L-serine.

It belongs to the class-II aminoacyl-tRNA synthetase family. Type-1 seryl-tRNA synthetase subfamily. In terms of assembly, homodimer. The tRNA molecule binds across the dimer.

Its subcellular location is the cytoplasm. It carries out the reaction tRNA(Ser) + L-serine + ATP = L-seryl-tRNA(Ser) + AMP + diphosphate + H(+). The enzyme catalyses tRNA(Sec) + L-serine + ATP = L-seryl-tRNA(Sec) + AMP + diphosphate + H(+). Its pathway is aminoacyl-tRNA biosynthesis; selenocysteinyl-tRNA(Sec) biosynthesis; L-seryl-tRNA(Sec) from L-serine and tRNA(Sec): step 1/1. In terms of biological role, catalyzes the attachment of serine to tRNA(Ser). Is also able to aminoacylate tRNA(Sec) with serine, to form the misacylated tRNA L-seryl-tRNA(Sec), which will be further converted into selenocysteinyl-tRNA(Sec). In Prochlorococcus marinus (strain MIT 9215), this protein is Serine--tRNA ligase.